The chain runs to 231 residues: Protein N-terminal glutamine amidohydrolase (231 aa).

The interval 1-21 (MADDRVAGGATPPPPPPPPPL) is disordered. Residues 11 to 21 (TPPPPPPPPPL) are compositionally biased toward pro residues. Catalysis depends on residues Cys33, His89, and Asp108.

It belongs to the NTAQ1 family. As to quaternary structure, monomer.

The enzyme catalyses N-terminal L-glutaminyl-[protein] + H2O = N-terminal L-glutamyl-[protein] + NH4(+). Mediates the side-chain deamidation of N-terminal glutamine residues to glutamate, an important step in N-end rule pathway of protein degradation. Conversion of the resulting N-terminal glutamine to glutamate renders the protein susceptible to arginylation, polyubiquitination and degradation as specified by the N-end rule. Does not act on substrates with internal or C-terminal glutamine and does not act on non-glutamine residues in any position. In Oryza sativa subsp. indica (Rice), this protein is Protein N-terminal glutamine amidohydrolase.